The chain runs to 356 residues: Tyrosine recombinase XerS (356 aa).

The region spanning 16–121 is the Core-binding (CB) domain; the sequence is VMPPYVLEYY…ALSSLYKYLT (106 aa). In terms of domain architecture, Tyr recombinase spans 169-354; it reads GFLDYIDSEY…INEEQKNALD (186 aa). Residues R210, K234, H306, R309, and H332 contribute to the active site. The active-site O-(3'-phospho-DNA)-tyrosine intermediate is the Y341.

Belongs to the 'phage' integrase family. XerS subfamily.

It is found in the cytoplasm. With respect to regulation, ftsK is required for recombination. Site-specific tyrosine recombinase, which acts by catalyzing the cutting and rejoining of the recombining DNA molecules. Essential to convert dimers of the bacterial chromosome into monomers to permit their segregation at cell division. The protein is Tyrosine recombinase XerS of Lactococcus lactis subsp. cremoris (strain SK11).